A 1065-amino-acid chain; its full sequence is Carbamoyl phosphate synthase large chain (1065 aa).

The tract at residues 1–401 is carboxyphosphate synthetic domain; it reads MPLDKTIKKV…ALLKAVTSLE (401 aa). ATP is bound by residues Arg129, Arg169, Gly175, Gly176, Gln208, Val210, Glu215, Gly241, Val242, His243, Gln284, and Glu298. The region spanning 133-327 is the ATP-grasp 1 domain; that stretch reads KNLMEEIDEP…IAKIAAKIAV (195 aa). Residues Gln284, Glu298, and Asn300 each coordinate Mg(2+). The Mn(2+) site is built by Gln284, Glu298, and Asn300. An oligomerization domain region spans residues 402–548; sequence GKISGLRLEK…YSSYENEDEN (147 aa). Residues 549-931 form a carbamoyl phosphate synthetic domain region; it reads EVTDDKKIVV…AIYKGFRAAG (383 aa). In terms of domain architecture, ATP-grasp 2 spans 673 to 863; the sequence is SELLKELNIP…MVKLAVEILT (191 aa). 10 residues coordinate ATP: Arg709, Lys748, Ile750, Glu754, Gly779, Val780, His781, Ser782, Gln822, and Glu834. Positions 822, 834, and 836 each coordinate Mg(2+). 3 residues coordinate Mn(2+): Gln822, Glu834, and Asn836. The region spanning 932–1065 is the MGS-like domain; sequence IEVPKDGGNL…EYRAMKEYFK (134 aa). The allosteric domain stretch occupies residues 932 to 1065; sequence IEVPKDGGNL…EYRAMKEYFK (134 aa).

It belongs to the CarB family. As to quaternary structure, composed of two chains; the small (or glutamine) chain promotes the hydrolysis of glutamine to ammonia, which is used by the large (or ammonia) chain to synthesize carbamoyl phosphate. Tetramer of heterodimers (alpha,beta)4. Mg(2+) serves as cofactor. Requires Mn(2+) as cofactor.

It catalyses the reaction hydrogencarbonate + L-glutamine + 2 ATP + H2O = carbamoyl phosphate + L-glutamate + 2 ADP + phosphate + 2 H(+). The catalysed reaction is hydrogencarbonate + NH4(+) + 2 ATP = carbamoyl phosphate + 2 ADP + phosphate + 2 H(+). It participates in amino-acid biosynthesis; L-arginine biosynthesis; carbamoyl phosphate from bicarbonate: step 1/1. The protein operates within pyrimidine metabolism; UMP biosynthesis via de novo pathway; (S)-dihydroorotate from bicarbonate: step 1/3. Its function is as follows. Large subunit of the glutamine-dependent carbamoyl phosphate synthetase (CPSase). CPSase catalyzes the formation of carbamoyl phosphate from the ammonia moiety of glutamine, carbonate, and phosphate donated by ATP, constituting the first step of 2 biosynthetic pathways, one leading to arginine and/or urea and the other to pyrimidine nucleotides. The large subunit (synthetase) binds the substrates ammonia (free or transferred from glutamine from the small subunit), hydrogencarbonate and ATP and carries out an ATP-coupled ligase reaction, activating hydrogencarbonate by forming carboxy phosphate which reacts with ammonia to form carbamoyl phosphate. The polypeptide is Carbamoyl phosphate synthase large chain (Clostridium acetobutylicum (strain ATCC 824 / DSM 792 / JCM 1419 / IAM 19013 / LMG 5710 / NBRC 13948 / NRRL B-527 / VKM B-1787 / 2291 / W)).